The following is a 330-amino-acid chain: Probable inactive heme oxygenase 2, chloroplastic (330 aa).

2 stretches are compositionally biased toward low complexity: residues 1 to 13 (MPLA…SAVV) and 56 to 69 (AAEA…VDEA). Disordered regions lie at residues 1-27 (MPLA…RARP), 50-82 (PSPP…YPRQ), and 107-156 (TTLK…LEGE). A chloroplast-targeting transit peptide spans 1 to 47 (MPLAAAVAASAVVPPRPPPPPPRRARPLRSFTGLILTRDLAALTVAR). Acidic residues predominate over residues 114-151 (TGAEEEVGDGVSEDASASEEEEEEEDDDDVVEEEEEGA).

This sequence belongs to the heme oxygenase family.

It is found in the plastid. The protein localises to the chloroplast. Its function is as follows. Probable inactive heme oxygenase that may play a role in the regulation of phytochrome assembly and photomorphogenesis. The protein is Probable inactive heme oxygenase 2, chloroplastic (HO2) of Oryza sativa subsp. japonica (Rice).